We begin with the raw amino-acid sequence, 341 residues long: Phosphate acyltransferase (341 aa).

It belongs to the PlsX family. In terms of assembly, homodimer. Probably interacts with PlsY.

The protein resides in the cytoplasm. The catalysed reaction is a fatty acyl-[ACP] + phosphate = an acyl phosphate + holo-[ACP]. It participates in lipid metabolism; phospholipid metabolism. Its function is as follows. Catalyzes the reversible formation of acyl-phosphate (acyl-PO(4)) from acyl-[acyl-carrier-protein] (acyl-ACP). This enzyme utilizes acyl-ACP as fatty acyl donor, but not acyl-CoA. This chain is Phosphate acyltransferase, found in Ehrlichia ruminantium (strain Gardel).